The following is a 59-amino-acid chain: MRDLIAEVVESYDSARLDAETAELVEKYLARVVLRHVFLEEELDGETEIVLRILKRFLS.

This is an uncharacterized protein from Archaeoglobus fulgidus (strain ATCC 49558 / DSM 4304 / JCM 9628 / NBRC 100126 / VC-16).